Here is a 337-residue protein sequence, read N- to C-terminus: m7GpppX diphosphatase (337 aa).

The interval 1–37 (MAELAHQQSKRKRELDAEEAEASSTEGEEAGVGNGTS) is disordered. N-acetylalanine is present on Ala-2. A nuclear localization signal (NLS) motif is present at residues 10 to 13 (KRKR). Residues 16-29 (DAEEAEASSTEGEE) show a composition bias toward acidic residues. Residues Ser-24 and Ser-101 each carry the phosphoserine modification. Residues Lys-138 and Lys-142 each carry the N6-acetyllysine modification. The short motif at 142–154 (KYLRQDLHLVRET) is the nuclear export sequence (NES) element. Substrate-binding positions include Trp-175, Glu-185, Asp-205, Lys-207, and 268-279 (HYLPSYYHLHVH). Positions 275-279 (HLHVH) match the Histidine triad motif motif. Residue His-277 is the Nucleophile of the active site.

This sequence belongs to the HIT family. As to quaternary structure, homodimer. Associates with components of the exosome multienzyme ribonuclease complex, such as EXOSC3 and EXOSC4. Interacts with NDOR1.

It localises to the cytoplasm. The protein localises to the nucleus. It catalyses the reaction a 5'-end (N(7)-methyl 5'-triphosphoguanosine)-ribonucleoside in mRNA + H2O = N(7)-methyl-GMP + a 5'-end diphospho-ribonucleoside in mRNA + 2 H(+). Its activity is regulated as follows. The hydrolytic product 7-methylguanosine diphosphate (m7GDP) efficiently inhibits the decapping scavenger activity and acts as a competitive inhibitor in vitro. Inhibited by 2,4-diaminoquinazoline. Functionally, decapping scavenger enzyme that catalyzes the cleavage of a residual cap structure following the degradation of mRNAs by 3'-&gt;5' exosome-mediated mRNA decay pathway. Hydrolyzes cap analog structures like 7-methylguanosine nucleoside triphosphate (m7GpppG) with up to 10 nucleotide substrates (small capped oligoribonucleotides) and specifically releases 5'-phosphorylated RNA fragments and 7-methylguanosine monophosphate (m7GMP). Cleaves cap analog structures like tri-methyl guanosine nucleoside triphosphate (m3(2,2,7)GpppG) with very poor efficiency. Does not hydrolyze unmethylated cap analog (GpppG) and shows no decapping activity on intact m7GpppG-capped mRNA molecules longer than 25 nucleotides. Does not hydrolyze 7-methylguanosine diphosphate (m7GDP) to m7GMP. May also play a role in the 5'-&gt;3 mRNA decay pathway; m7GDP, the downstream product released by the 5'-&gt;3' mRNA mediated decapping activity, may be also converted by DCPS to m7GMP. Binds to m7GpppG and strongly to m7GDP. Plays a role in first intron splicing of pre-mRNAs. Inhibits activation-induced cell death. The polypeptide is m7GpppX diphosphatase (DCPS) (Bos taurus (Bovine)).